Consider the following 489-residue polypeptide: Palmitoyltransferase ZDHHC14 (489 aa).

Residues 1 to 60 lie on the Cytoplasmic side of the membrane; it reads MPPGGGGPMKDCEYSQISTHSSSPMESPHKKKKIAARRKWEVFPGRNKFFCNGRIMMARQ. A helical transmembrane segment spans residues 61–81; it reads TGVFYLTLILILVTSGLFFAF. At 82 to 89 the chain is on the lumenal side; the sequence is DCRYLAEK. Residues 90 to 110 traverse the membrane as a helical segment; that stretch reads ITPAIPVVGGILFFFVMGTLL. The Cytoplasmic portion of the chain corresponds to 111–208; it reads RTSFSDPGVL…GNCVGKRNYR (98 aa). Residues 165–215 enclose the DHHC domain; the sequence is KYCFTCKIFRPPRASHCSLCDNCVEQFDHHCPWVGNCVGKRNYRFFYMFIL. The active-site S-palmitoyl cysteine intermediate is the C195. The helical transmembrane segment at 209 to 229 threads the bilayer; the sequence is FFYMFILSLSFLTVFIFAFVI. Residues 230-255 are Lumenal-facing; the sequence is THVIHRSQQKGFLDALKDSPASVLEA. The helical transmembrane segment at 256–276 threads the bilayer; the sequence is VICFFSVWSIIGLSGFHTYLI. Topologically, residues 277 to 489 are cytoplasmic; sequence SSNQTTNEDI…VRGLVKLSSV (213 aa). The segment at 434–454 is disordered; sequence HGGHQFLTPDEAPSPPRMLGA. S456 bears the Phosphoserine mark.

It belongs to the DHHC palmitoyltransferase family. ERF2/ZDHHC9 subfamily.

It localises to the endoplasmic reticulum membrane. It is found in the golgi apparatus membrane. It catalyses the reaction L-cysteinyl-[protein] + hexadecanoyl-CoA = S-hexadecanoyl-L-cysteinyl-[protein] + CoA. Its function is as follows. Palmitoyltransferase that could catalyze the addition of palmitate onto various protein substrates. May have a palmitoyltransferase activity toward the beta-2 adrenergic receptor/ADRB2 and thereby regulate G protein-coupled receptor signaling. May play a role in cell differentiation and apoptosis. This is Palmitoyltransferase ZDHHC14 from Mus musculus (Mouse).